The chain runs to 352 residues: UDP-3-O-acylglucosamine N-acyltransferase (352 aa).

The active-site Proton acceptor is His-257.

This sequence belongs to the transferase hexapeptide repeat family. LpxD subfamily. Homotrimer.

The enzyme catalyses a UDP-3-O-[(3R)-3-hydroxyacyl]-alpha-D-glucosamine + a (3R)-hydroxyacyl-[ACP] = a UDP-2-N,3-O-bis[(3R)-3-hydroxyacyl]-alpha-D-glucosamine + holo-[ACP] + H(+). The protein operates within bacterial outer membrane biogenesis; LPS lipid A biosynthesis. In terms of biological role, catalyzes the N-acylation of UDP-3-O-acylglucosamine using 3-hydroxyacyl-ACP as the acyl donor. Is involved in the biosynthesis of lipid A, a phosphorylated glycolipid that anchors the lipopolysaccharide to the outer membrane of the cell. This Methylobacterium nodulans (strain LMG 21967 / CNCM I-2342 / ORS 2060) protein is UDP-3-O-acylglucosamine N-acyltransferase.